Reading from the N-terminus, the 146-residue chain is Snaclec stejaggregin-B subunit beta-2 (146 aa).

A signal peptide spans 1–23 (MGRFIFVSFGLLVVFLSLSGSGA). The 112-residue stretch at 32–143 (YDLYCYRVFQ…CSQTYPFVCK (112 aa)) folds into the C-type lectin domain. Intrachain disulfides connect cysteine 53–cysteine 142 and cysteine 119–cysteine 134.

Belongs to the snaclec family. In terms of assembly, heteromultimer; disulfide-linked. As to expression, expressed by the venom gland.

It is found in the secreted. In terms of biological role, interferes with one step of hemostasis (modulation of platelet aggregation, or coagulation cascade, for example). This Trimeresurus stejnegeri (Chinese green tree viper) protein is Snaclec stejaggregin-B subunit beta-2.